We begin with the raw amino-acid sequence, 122 residues long: Large ribosomal subunit protein uL14 (122 aa).

Belongs to the universal ribosomal protein uL14 family. As to quaternary structure, part of the 50S ribosomal subunit. Forms a cluster with proteins L3 and L19. In the 70S ribosome, L14 and L19 interact and together make contacts with the 16S rRNA in bridges B5 and B8.

Its function is as follows. Binds to 23S rRNA. Forms part of two intersubunit bridges in the 70S ribosome. The chain is Large ribosomal subunit protein uL14 from Thermosynechococcus vestitus (strain NIES-2133 / IAM M-273 / BP-1).